Reading from the N-terminus, the 771-residue chain is Hyperosmolality-gated Ca2+ permeable channel 1.3 (771 aa).

Residues 7-27 traverse the membrane as a helical segment; that stretch reads IGVAAAINILTAIIFLLAFAI. Ser-54 bears the Phosphoserine mark. Helical transmembrane passes span 101 to 121, 158 to 178, 375 to 395, 427 to 447, 467 to 487, 512 to 532, 584 to 604, 630 to 650, and 651 to 671; these read IYLIGLKIFVPIALLAWSILV, FWTHLVMAYAFTFWTCYVLMK, LIMHIAFFFLTFFFMIPIAFV, FLPGIVLKLFLIFLPSILMVM, YYIFNLINVFLGSVITGSAFE, ATFFITYIMVDGWAGIAGEIL, PVTPVLLPFIIIFFALAYLVF, IISALIIAQILLMGLLSTKGA, and AQSTPFLLFLPIITFFFHRYC. The tract at residues 744 to 771 is disordered; it reads VPTKRQSRINTPAVSHASRGSSRSPPSK. Over residues 751-771 the composition is skewed to polar residues; it reads RINTPAVSHASRGSSRSPPSK.

It belongs to the CSC1 (TC 1.A.17) family. In terms of processing, phosphorylated at Ser-54 by BIK1 in response to pathogen-associated molecular pattern (PAMP) perception, promoting its activation. In terms of tissue distribution, preferentially expressed in guard cells.

The protein localises to the cell membrane. It carries out the reaction Ca(2+)(in) = Ca(2+)(out). Its activity is regulated as follows. Activated following phosphorylation at Ser-54 by BIK1. Calcium-permeable channel that plays a key role in plant stomatal immunity. In response to pathogen-associated molecular pattern (PAMP) perception, phosphorylated and activated by BIK1, triggering rapid influx of calcium ions across the plasma membrane, leading to stomatal closure. This chain is Hyperosmolality-gated Ca2+ permeable channel 1.3, found in Arabidopsis thaliana (Mouse-ear cress).